The following is a 317-amino-acid chain: Adenine deaminase (317 aa).

His-14, His-16, and His-194 together coordinate Zn(2+). The active-site Proton donor is the Glu-197. Asp-275 contributes to the Zn(2+) binding site. Asp-276 is a binding site for substrate.

This sequence belongs to the metallo-dependent hydrolases superfamily. Adenosine and AMP deaminases family. Adenine deaminase type 2 subfamily. Requires Zn(2+) as cofactor.

It catalyses the reaction adenine + H2O + H(+) = hypoxanthine + NH4(+). Functionally, catalyzes the hydrolytic deamination of adenine to hypoxanthine. Plays an important role in the purine salvage pathway and in nitrogen catabolism. In Pseudomonas syringae pv. tomato (strain ATCC BAA-871 / DC3000), this protein is Adenine deaminase.